A 275-amino-acid chain; its full sequence is tRNA uridine(34) hydroxylase (275 aa).

Residues 121 to 214 (SQPDVLVIDT…YLEKTYNKNG (94 aa)) enclose the Rhodanese domain. Cysteine 174 functions as the Cysteine persulfide intermediate in the catalytic mechanism.

It belongs to the TrhO family.

The enzyme catalyses uridine(34) in tRNA + AH2 + O2 = 5-hydroxyuridine(34) in tRNA + A + H2O. Catalyzes oxygen-dependent 5-hydroxyuridine (ho5U) modification at position 34 in tRNAs. The sequence is that of tRNA uridine(34) hydroxylase from Wolbachia pipientis wMel.